Consider the following 138-residue polypeptide: Putative pre-16S rRNA nuclease (138 aa).

The protein belongs to the YqgF nuclease family.

It localises to the cytoplasm. Could be a nuclease involved in processing of the 5'-end of pre-16S rRNA. This Karelsulcia muelleri (strain GWSS) (Sulcia muelleri) protein is Putative pre-16S rRNA nuclease.